Consider the following 434-residue polypeptide: Mannose-6-phosphate isomerase (434 aa).

The Zn(2+) site is built by Gln-109, His-111, and Glu-136. Positions 181 to 191 (SLGLPTSQPPD) are enriched in polar residues. The interval 181-200 (SLGLPTSQPPDTSLFKPTES) is disordered. His-291 is a Zn(2+) binding site. Arg-310 is a catalytic residue.

This sequence belongs to the mannose-6-phosphate isomerase type 1 family. It depends on Zn(2+) as a cofactor.

It localises to the cytoplasm. The enzyme catalyses D-mannose 6-phosphate = D-fructose 6-phosphate. The protein operates within nucleotide-sugar biosynthesis; GDP-alpha-D-mannose biosynthesis; alpha-D-mannose 1-phosphate from D-fructose 6-phosphate: step 1/2. Functionally, involved in the synthesis of the GDP-mannose and dolichol-phosphate-mannose required for a number of critical mannosyl transfer reactions. The chain is Mannose-6-phosphate isomerase (MAN1) from Cryptococcus neoformans var. neoformans serotype D (strain JEC21 / ATCC MYA-565) (Filobasidiella neoformans).